Here is a 40-residue protein sequence, read N- to C-terminus: U4-ctenitoxin-Co1c (40 aa).

Cystine bridges form between C3–C20, C10–C26, C19–C40, and C28–C38.

Expressed by the venom gland.

It is found in the secreted. Functionally, not toxic to mice by intracerebroventricular injection. This Ctenus ornatus (Brazilian spider) protein is U4-ctenitoxin-Co1c.